The chain runs to 495 residues: Muscle LIM protein Mlp84B (495 aa).

In terms of domain architecture, LIM zinc-binding 1 spans 12–63 (CPRCGKSVYAAEERLAGGYVFHKNCFKCGMCNKSLDSTNCTEHERELYCKTC). The Nuclear localization signal motif lies at 66-71 (RKFGPK). An LIM zinc-binding 2 domain is found at 120-172 (CPRCGGYVYAAEQMLARGRSWHKECFKCGTCKKGLDSILCCEAPDKNIYCKGC). A Nuclear localization signal motif is present at residues 175-180 (KKFGPK). LIM zinc-binding domains follow at residues 222 to 274 (CPRC…CRTC), 325 to 377 (CPRC…CRAC), and 421 to 473 (CPRC…CRAC).

In terms of tissue distribution, in the embryo, expression is restricted to the somatic, visceral, and pharyngeal muscles. Within the somatic musculature, expression is localized at the ends of muscles fibers at the point of attachment to the epidermis (at protein level). There is no expression in cardiac mesoderm or in fat body.

Its subcellular location is the cytoplasm. The protein resides in the nucleus. Functionally, plays a role in cell differentiation late in myogenesis. Transcription factor Mef2 is essential for expression. The polypeptide is Muscle LIM protein Mlp84B (Drosophila melanogaster (Fruit fly)).